A 449-amino-acid polypeptide reads, in one-letter code: UDP-N-acetylmuramoylalanine--D-glutamate ligase (449 aa).

116–122 (GSNGKST) lines the ATP pocket.

It belongs to the MurCDEF family.

The protein resides in the cytoplasm. The catalysed reaction is UDP-N-acetyl-alpha-D-muramoyl-L-alanine + D-glutamate + ATP = UDP-N-acetyl-alpha-D-muramoyl-L-alanyl-D-glutamate + ADP + phosphate + H(+). It participates in cell wall biogenesis; peptidoglycan biosynthesis. Functionally, cell wall formation. Catalyzes the addition of glutamate to the nucleotide precursor UDP-N-acetylmuramoyl-L-alanine (UMA). This chain is UDP-N-acetylmuramoylalanine--D-glutamate ligase, found in Shewanella violacea (strain JCM 10179 / CIP 106290 / LMG 19151 / DSS12).